Reading from the N-terminus, the 112-residue chain is MAVPQFHRPSTVTTDSVRALGMRGLVLATNNSQFIMDNNHPHPQGTQGAVREFLRGQAAALTDLGLAHANNTFTPQPMFAGDAPAAWLRPAFGLRRTYSPFVVREPSTPGTP.

It belongs to the herpesviridae small capsomere-interacting protein family. As to quaternary structure, interacts with the major capsid protein/MCP. Interacts with host TSPAN7; this interaction may be responsible for the presence of TSPAN7 in extracellular virions. Interacts with host MAPRE3 and DYNLT1; these interactions mediate retrograde transport of viral capsids.

Its subcellular location is the virion. The protein resides in the host nucleus. Its function is as follows. Participates in the assembly of the infectious particles by decorating the outer surface of the capsid shell and thus forming a layer between the capsid and the tegument. Complexes composed of the major capsid protein and small capsomere-interacting protein/SCP assemble together in the host cytoplasm and are translocated to the nucleus, where they accumulate and participate in capsid assembly. Interaction with host dynein light chains suggests a possible function in the retrogarde transport of incoming viral capsids. In Human herpesvirus 1 (strain 17) (HHV-1), this protein is Small capsomere-interacting protein.